Reading from the N-terminus, the 360-residue chain is Phospho-N-acetylmuramoyl-pentapeptide-transferase (360 aa).

10 helical membrane-spanning segments follow: residues 26-46 (AILS…IMIK), 70-90 (GTPT…ILLW), 94-114 (SNPY…IGFV), 132-152 (WKYF…YAYG), 168-188 (IMPQ…VGTS), 199-219 (GLAI…AWAT), 236-256 (ASEL…FLWF), 263-283 (VFMG…IAVL), 288-308 (LILV…ILQV), and 338-358 (VIVR…ATLK).

Belongs to the glycosyltransferase 4 family. MraY subfamily. It depends on Mg(2+) as a cofactor.

It localises to the cell inner membrane. It catalyses the reaction UDP-N-acetyl-alpha-D-muramoyl-L-alanyl-gamma-D-glutamyl-meso-2,6-diaminopimeloyl-D-alanyl-D-alanine + di-trans,octa-cis-undecaprenyl phosphate = di-trans,octa-cis-undecaprenyl diphospho-N-acetyl-alpha-D-muramoyl-L-alanyl-D-glutamyl-meso-2,6-diaminopimeloyl-D-alanyl-D-alanine + UMP. The protein operates within cell wall biogenesis; peptidoglycan biosynthesis. Functionally, catalyzes the initial step of the lipid cycle reactions in the biosynthesis of the cell wall peptidoglycan: transfers peptidoglycan precursor phospho-MurNAc-pentapeptide from UDP-MurNAc-pentapeptide onto the lipid carrier undecaprenyl phosphate, yielding undecaprenyl-pyrophosphoryl-MurNAc-pentapeptide, known as lipid I. The polypeptide is Phospho-N-acetylmuramoyl-pentapeptide-transferase (Vibrio campbellii (strain ATCC BAA-1116)).